A 59-amino-acid polypeptide reads, in one-letter code: Potassium channel toxin alpha-KTx 1.12 (59 aa).

The N-terminal stretch at 1–22 is a signal peptide; the sequence is MKILSVLLLALIICSIVGWSEA. Gln23 carries the post-translational modification Pyrrolidone carboxylic acid. Disulfide bonds link Cys29/Cys50, Cys35/Cys55, and Cys39/Cys57. The tract at residues 48–55 is interaction with Ca(2+)-activated K(+) channels; sequence GKCMNKKC.

It belongs to the short scorpion toxin superfamily. Potassium channel inhibitor family. Alpha-KTx 01 subfamily. Expressed by the venom gland.

It is found in the secreted. Functionally, potent selective inhibitor of high conductance (maxi-K), different medium and small conductance calcium-activated potassium channels (KCa1.1/KCNMA1 and others), as well as a voltage-dependent potassium channel (Kv1.3/KCNA3&gt;Kv1.2/KCNA2&gt;Kv1.6/KCNA3&gt;&gt;Shaker/Sh). It blocks channel activity by a simple bimolecular inhibition process. Has a pH-specific antimicrobial activity against bacteria (B.subtilis, E.coli and S.aureus) and the fungus C.albicans. This chain is Potassium channel toxin alpha-KTx 1.12, found in Leiurus hebraeus (Hebrew deathstalker scorpion).